The following is a 553-amino-acid chain: Solute carrier family 22 member 12 (553 aa).

Residues 10–30 (VGGLGRFQLFQTVALVTPILW) traverse the membrane as a helical segment. Asn56 carries N-linked (GlcNAc...) asparagine glycosylation. Helical transmembrane passes span 146–166 (PMAQ…CGHA), 182–202 (LVSV…YCLF), 204–224 (FLLA…LMEW), 232–252 (LVMT…GSVA), 260–280 (MLQL…WWLP), 351–371 (IISM…ALDL), 378–398 (IFLL…GSLL), 412–432 (FLVL…GMGV), 435–455 (SALA…ITIF), 466–486 (MTAV…GPLV), and 495–515 (WMPL…ALLL). Ser534 is subject to Phosphoserine. Position 542 is a phosphothreonine (Thr542).

It belongs to the major facilitator (TC 2.A.1) superfamily. Organic cation transporter (TC 2.A.1.19) family. In terms of assembly, interacts with PDZK1. N-glycosylated. As to expression, detected in kidney (at protein level). Detected in kidney cortex, in proximal tubules.

The protein localises to the apical cell membrane. It carries out the reaction urate(out) + (S)-lactate(in) = urate(in) + (S)-lactate(out). The catalysed reaction is nicotinate(in) + urate(out) = nicotinate(out) + urate(in). The enzyme catalyses urate(out) + n chloride(in) = urate(in) + n chloride(out). It catalyses the reaction orotate(out) + nicotinate(in) = orotate(in) + nicotinate(out). Functionally, electroneutral antiporter that translocates urate across the apical membrane of proximal tubular cells in exchange for monovalent organic or inorganic anions. Involved in renal reabsorption of urate and helps maintaining blood levels of uric acid. Mediates urate uptake by an exchange with organic anions such as (S)-lactate and nicotinate, and inorganic anion Cl(-). Other inorganic anions such as Br(-), I(-) and NO3(-) may also act as counteranions that exchange for urate. Also mediates orotate tubular uptake coupled with nicotinate efflux and to a lesser extent with lactate efflux, therefore displaying a potential role in orotate renal reabsorption. Orotate transport is Cl(-)-dependent. The sequence is that of Solute carrier family 22 member 12 from Mus musculus (Mouse).